The chain runs to 467 residues: 3-isopropylmalate dehydratase large subunit (467 aa).

[4Fe-4S] cluster contacts are provided by Cys347, Cys407, and Cys410. Polar residues predominate over residues 422–442; sequence QISASSSNRNFKGRQGSSSGR. The disordered stretch occupies residues 422-443; the sequence is QISASSSNRNFKGRQGSSSGRT.

The protein belongs to the aconitase/IPM isomerase family. LeuC type 1 subfamily. In terms of assembly, heterodimer of LeuC and LeuD. Requires [4Fe-4S] cluster as cofactor.

The enzyme catalyses (2R,3S)-3-isopropylmalate = (2S)-2-isopropylmalate. It participates in amino-acid biosynthesis; L-leucine biosynthesis; L-leucine from 3-methyl-2-oxobutanoate: step 2/4. Functionally, catalyzes the isomerization between 2-isopropylmalate and 3-isopropylmalate, via the formation of 2-isopropylmaleate. The chain is 3-isopropylmalate dehydratase large subunit from Nostoc punctiforme (strain ATCC 29133 / PCC 73102).